Consider the following 177-residue polypeptide: Large ribosomal subunit protein uL6 (177 aa).

It belongs to the universal ribosomal protein uL6 family. Part of the 50S ribosomal subunit.

Its function is as follows. This protein binds to the 23S rRNA, and is important in its secondary structure. It is located near the subunit interface in the base of the L7/L12 stalk, and near the tRNA binding site of the peptidyltransferase center. The chain is Large ribosomal subunit protein uL6 from Chromobacterium violaceum (strain ATCC 12472 / DSM 30191 / JCM 1249 / CCUG 213 / NBRC 12614 / NCIMB 9131 / NCTC 9757 / MK).